The sequence spans 283 residues: Bifunctional protein FolD (283 aa).

Residues 164-166, Ser189, and Ile230 each bind NADP(+); that span reads GRS.

It belongs to the tetrahydrofolate dehydrogenase/cyclohydrolase family. Homodimer.

The enzyme catalyses (6R)-5,10-methylene-5,6,7,8-tetrahydrofolate + NADP(+) = (6R)-5,10-methenyltetrahydrofolate + NADPH. It catalyses the reaction (6R)-5,10-methenyltetrahydrofolate + H2O = (6R)-10-formyltetrahydrofolate + H(+). It participates in one-carbon metabolism; tetrahydrofolate interconversion. Its function is as follows. Catalyzes the oxidation of 5,10-methylenetetrahydrofolate to 5,10-methenyltetrahydrofolate and then the hydrolysis of 5,10-methenyltetrahydrofolate to 10-formyltetrahydrofolate. The chain is Bifunctional protein FolD from Lactobacillus delbrueckii subsp. bulgaricus (strain ATCC BAA-365 / Lb-18).